A 240-amino-acid chain; its full sequence is UDP-2,3-diacylglucosamine hydrolase (240 aa).

Mn(2+)-binding residues include D8, H10, D41, N79, and H114. N79–R80 is a binding site for substrate. Substrate contacts are provided by D122, S160, N164, K167, and H195. Mn(2+)-binding residues include H195 and H197.

This sequence belongs to the LpxH family. Requires Mn(2+) as cofactor.

It localises to the cell inner membrane. The catalysed reaction is UDP-2-N,3-O-bis[(3R)-3-hydroxytetradecanoyl]-alpha-D-glucosamine + H2O = 2-N,3-O-bis[(3R)-3-hydroxytetradecanoyl]-alpha-D-glucosaminyl 1-phosphate + UMP + 2 H(+). Its pathway is glycolipid biosynthesis; lipid IV(A) biosynthesis; lipid IV(A) from (3R)-3-hydroxytetradecanoyl-[acyl-carrier-protein] and UDP-N-acetyl-alpha-D-glucosamine: step 4/6. Hydrolyzes the pyrophosphate bond of UDP-2,3-diacylglucosamine to yield 2,3-diacylglucosamine 1-phosphate (lipid X) and UMP by catalyzing the attack of water at the alpha-P atom. Involved in the biosynthesis of lipid A, a phosphorylated glycolipid that anchors the lipopolysaccharide to the outer membrane of the cell. This Salmonella paratyphi C (strain RKS4594) protein is UDP-2,3-diacylglucosamine hydrolase.